Reading from the N-terminus, the 39-residue chain is Conotoxin Cl14.7 (39 aa).

The propeptide occupies 1-15 (MGDLSEADSMKHQLQ).

Contains 2 disulfide bonds. As to expression, expressed by the venom duct.

It localises to the secreted. The sequence is that of Conotoxin Cl14.7 from Californiconus californicus (California cone).